The chain runs to 470 residues: ATP-dependent protease ATPase subunit HslU (470 aa).

ATP-binding positions include Val22 and 64–69; that span reads GVGKTE. The tract at residues 145 to 187 is disordered; that stretch reads KKANNNTNSNNPLESLFGGSIPNFGQNNDDEEETPTDEVKTKR. Positions 283, 348, and 420 each coordinate ATP.

Belongs to the ClpX chaperone family. HslU subfamily. A double ring-shaped homohexamer of HslV is capped on each side by a ring-shaped HslU homohexamer. The assembly of the HslU/HslV complex is dependent on binding of ATP.

It localises to the cytoplasm. In terms of biological role, ATPase subunit of a proteasome-like degradation complex; this subunit has chaperone activity. The binding of ATP and its subsequent hydrolysis by HslU are essential for unfolding of protein substrates subsequently hydrolyzed by HslV. HslU recognizes the N-terminal part of its protein substrates and unfolds these before they are guided to HslV for hydrolysis. The protein is ATP-dependent protease ATPase subunit HslU of Staphylococcus saprophyticus subsp. saprophyticus (strain ATCC 15305 / DSM 20229 / NCIMB 8711 / NCTC 7292 / S-41).